The chain runs to 233 residues: Phosphatidylserine decarboxylase proenzyme (233 aa).

The active-site Schiff-base intermediate with substrate; via pyruvic acid is the Ser-201. Ser-201 is modified (pyruvic acid (Ser); by autocatalysis).

This sequence belongs to the phosphatidylserine decarboxylase family. PSD-A subfamily. As to quaternary structure, heterodimer of a large membrane-associated beta subunit and a small pyruvoyl-containing alpha subunit. Requires pyruvate as cofactor. In terms of processing, is synthesized initially as an inactive proenzyme. Formation of the active enzyme involves a self-maturation process in which the active site pyruvoyl group is generated from an internal serine residue via an autocatalytic post-translational modification. Two non-identical subunits are generated from the proenzyme in this reaction, and the pyruvate is formed at the N-terminus of the alpha chain, which is derived from the carboxyl end of the proenzyme. The post-translation cleavage follows an unusual pathway, termed non-hydrolytic serinolysis, in which the side chain hydroxyl group of the serine supplies its oxygen atom to form the C-terminus of the beta chain, while the remainder of the serine residue undergoes an oxidative deamination to produce ammonia and the pyruvoyl prosthetic group on the alpha chain.

The protein resides in the cell membrane. It carries out the reaction a 1,2-diacyl-sn-glycero-3-phospho-L-serine + H(+) = a 1,2-diacyl-sn-glycero-3-phosphoethanolamine + CO2. It functions in the pathway phospholipid metabolism; phosphatidylethanolamine biosynthesis; phosphatidylethanolamine from CDP-diacylglycerol: step 2/2. In terms of biological role, catalyzes the formation of phosphatidylethanolamine (PtdEtn) from phosphatidylserine (PtdSer). This chain is Phosphatidylserine decarboxylase proenzyme, found in Mycolicibacterium vanbaalenii (strain DSM 7251 / JCM 13017 / BCRC 16820 / KCTC 9966 / NRRL B-24157 / PYR-1) (Mycobacterium vanbaalenii).